The following is a 451-amino-acid chain: Cyclin-dependent kinase 14 (451 aa).

Phosphoserine is present on residues S60 and S77. Positions 84 to 114 (NFKTSSTGKESPKVRRHSSPSSPTSPKFGKA) are disordered. A Phosphoserine modification is found at S116. Positions 117 to 401 (YEKLEKLGEG…AQAALSHEYF (285 aa)) constitute a Protein kinase domain. ATP-binding positions include 123–131 (LGEGSYATV) and K146. D238 serves as the catalytic Proton acceptor.

Belongs to the protein kinase superfamily. CMGC Ser/Thr protein kinase family. CDC2/CDKX subfamily. Found in a complex with LRP6, CCNY and CAPRIN2 during G2/M stage; CAPRIN2 functions as a scaffold for the complex by binding to CCNY via its N terminus and to CDK14 via its C terminus. Interacts with CCNY; CCNY mediates its recruitment to the plasma membrane and promotes phosphorylation of LRP6. Interacts with CCDN3 and CDKN1A. Interacts with SEPT8. Interacts with 14-3-3 proteina YWHAB, YWHAE, YWHAH and YWHAQ.

It is found in the cell membrane. Its subcellular location is the cytoplasm. The protein resides in the nucleus. The catalysed reaction is L-seryl-[protein] + ATP = O-phospho-L-seryl-[protein] + ADP + H(+). It catalyses the reaction L-threonyl-[protein] + ATP = O-phospho-L-threonyl-[protein] + ADP + H(+). Serine/threonine-protein kinase activity is promoted by associated cyclins CCDN3 and CCNY and repressed by CDKN1A. Functionally, serine/threonine-protein kinase involved in the control of the eukaryotic cell cycle, whose activity is controlled by an associated cyclin. Acts as a cell-cycle regulator of Wnt signaling pathway during G2/M phase by mediating the phosphorylation of LRP6 at 'Ser-1490', leading to the activation of the Wnt signaling pathway. Acts as a regulator of cell cycle progression and cell proliferation via its interaction with CCDN3. Phosphorylates RB1 in vitro, however the relevance of such result remains to be confirmed in vivo. May also play a role in meiosis, neuron differentiation and may indirectly act as a negative regulator of insulin-responsive glucose transport. The chain is Cyclin-dependent kinase 14 (CDK14) from Plecturocebus moloch (Dusky titi monkey).